The following is a 295-amino-acid chain: Cyclin-G1 (295 aa).

This sequence belongs to the cyclin family. Cyclin G subfamily.

It is found in the nucleus. Its function is as follows. May play a role in growth regulation. Is associated with G2/M phase arrest in response to DNA damage. May be an intermediate by which p53 mediates its role as an inhibitor of cellular proliferation. This chain is Cyclin-G1 (CCNG1), found in Bos taurus (Bovine).